The chain runs to 344 residues: UDP-galactose/UDP-glucose transporter 5B (344 aa).

Transmembrane regions (helical) follow at residues Leu-16 to Leu-36, Leu-56 to Ala-76, Val-115 to Met-135, Phe-142 to Ala-162, Thr-176 to Phe-196, Cys-220 to Val-240, Cys-246 to Tyr-266, and Cys-292 to Gly-312. Residues Lys-324–Ser-344 are disordered.

It belongs to the nucleotide-sugar transporter family. UDP-galactose:UMP antiporter (TC 2.A.7.11) subfamily.

The protein localises to the membrane. Functionally, sugar transporter involved in the transport of nucleotide-sugars from cytoplasm into the Golgi and/or the endoplasmic reticulum. This chain is UDP-galactose/UDP-glucose transporter 5B, found in Arabidopsis thaliana (Mouse-ear cress).